The sequence spans 292 residues: UDP-N-acetylenolpyruvoylglucosamine reductase (292 aa).

One can recognise an FAD-binding PCMH-type domain in the interval 21–186 (QAGGLVDYLA…ISATFELQPD (166 aa)). Residue arginine 165 is part of the active site. The Proton donor role is filled by serine 215. Glutamate 285 is an active-site residue.

This sequence belongs to the MurB family. FAD is required as a cofactor.

It localises to the cytoplasm. The catalysed reaction is UDP-N-acetyl-alpha-D-muramate + NADP(+) = UDP-N-acetyl-3-O-(1-carboxyvinyl)-alpha-D-glucosamine + NADPH + H(+). It participates in cell wall biogenesis; peptidoglycan biosynthesis. Cell wall formation. This Leuconostoc mesenteroides subsp. mesenteroides (strain ATCC 8293 / DSM 20343 / BCRC 11652 / CCM 1803 / JCM 6124 / NCDO 523 / NBRC 100496 / NCIMB 8023 / NCTC 12954 / NRRL B-1118 / 37Y) protein is UDP-N-acetylenolpyruvoylglucosamine reductase.